The chain runs to 453 residues: Serine--tRNA ligase (453 aa).

252–254 is a binding site for L-serine; the sequence is TAE. ATP-binding positions include 283–285 and V299; that span reads RKE. E306 is a binding site for L-serine. 370–373 provides a ligand contact to ATP; it reads EMVS. T405 contributes to the L-serine binding site.

The protein belongs to the class-II aminoacyl-tRNA synthetase family. Type-1 seryl-tRNA synthetase subfamily. In terms of assembly, homodimer. The tRNA molecule binds across the dimer.

The protein resides in the cytoplasm. It carries out the reaction tRNA(Ser) + L-serine + ATP = L-seryl-tRNA(Ser) + AMP + diphosphate + H(+). The catalysed reaction is tRNA(Sec) + L-serine + ATP = L-seryl-tRNA(Sec) + AMP + diphosphate + H(+). It participates in aminoacyl-tRNA biosynthesis; selenocysteinyl-tRNA(Sec) biosynthesis; L-seryl-tRNA(Sec) from L-serine and tRNA(Sec): step 1/1. Catalyzes the attachment of serine to tRNA(Ser). Is also able to aminoacylate tRNA(Sec) with serine, to form the misacylated tRNA L-seryl-tRNA(Sec), which will be further converted into selenocysteinyl-tRNA(Sec). The protein is Serine--tRNA ligase of Sulfurisphaera tokodaii (strain DSM 16993 / JCM 10545 / NBRC 100140 / 7) (Sulfolobus tokodaii).